Reading from the N-terminus, the 471-residue chain is Glutamate--tRNA ligase 1 (471 aa).

The 'HIGH' region motif lies at 15 to 25 (PSPTGYLHIGG). The 'KMSKS' region motif lies at 243–247 (KLSKR). Lys246 contacts ATP.

The protein belongs to the class-I aminoacyl-tRNA synthetase family. Glutamate--tRNA ligase type 1 subfamily. As to quaternary structure, monomer.

The protein localises to the cytoplasm. The catalysed reaction is tRNA(Glu) + L-glutamate + ATP = L-glutamyl-tRNA(Glu) + AMP + diphosphate. Its function is as follows. Catalyzes the attachment of glutamate to tRNA(Glu) in a two-step reaction: glutamate is first activated by ATP to form Glu-AMP and then transferred to the acceptor end of tRNA(Glu). The polypeptide is Glutamate--tRNA ligase 1 (Dinoroseobacter shibae (strain DSM 16493 / NCIMB 14021 / DFL 12)).